A 321-amino-acid chain; its full sequence is MTKYALVGDVGGTNARLALCDIASGEISQAKTYSGLDYPSLEAVIRVYLEEHKVEVKDGCIAIACPITGDWVAMTNHTWAFSIAEMKKNLGFSHLEIINDFTAVSMAIPMLKKEHLIQFGGAEPVEGKPIAVYGAGTGLGVAHLVHVDKRWVSLPGEGGHVDFAPNSEEEGIILEILRAEIGHVSAERVLSGPGLVNLYRAIVKADNRLPENLKPKDITERALADSCTDCRRALSLFCVIMGRFGGNLALNLGTFGGVFIAGGIVPRFLEFFKASGFRAAFEDKGRFKEYVHDIPVYLIVHDNPGLLGSGAHLRQTLGHIL.

An ATP-binding site is contributed by 8–13 (GDVGGT).

The protein belongs to the bacterial glucokinase family.

The protein localises to the cytoplasm. The catalysed reaction is D-glucose + ATP = D-glucose 6-phosphate + ADP + H(+). This Escherichia coli O127:H6 (strain E2348/69 / EPEC) protein is Glucokinase.